The following is a 142-amino-acid chain: Small ribosomal subunit protein uS9 (142 aa).

The protein belongs to the universal ribosomal protein uS9 family.

The protein is Small ribosomal subunit protein uS9 (RPS16) of Debaryomyces hansenii (strain ATCC 36239 / CBS 767 / BCRC 21394 / JCM 1990 / NBRC 0083 / IGC 2968) (Yeast).